Consider the following 469-residue polypeptide: Extracellular endo-alpha-(1-&gt;5)-L-arabinanase 2 (469 aa).

Positions 1 to 26 (MFNRLFRVCFLAALIMAFTLPNSVYA) are cleaved as a signal peptide. The active-site Proton acceptor is aspartate 38. Substrate-binding positions include aspartate 38, aspartate 122, 168–171 (NVVD), 188–190 (SYS), and 220–224 (HSRIE). The Proton donor role is filled by glutamate 224. Histidine 318 provides a ligand contact to Ca(2+).

It belongs to the glycosyl hydrolase 43 family. As to quaternary structure, homodimer. The cofactor is Ca(2+).

It localises to the secreted. The catalysed reaction is Endohydrolysis of (1-&gt;5)-alpha-arabinofuranosidic linkages in (1-&gt;5)-arabinans.. The protein operates within glycan metabolism; L-arabinan degradation. Involved in the degradation of arabinan and is a key enzyme in the complete degradation of the plant cell wall. Catalyzes the internal cleavage of alpha-(1-&gt;5)-L-arabinofuranosyl residues of the alpha-1,5-L-arabinan to produce arabino-oligosaccharides and L-arabinose. It is also active toward linear branched sugar beet arabinan, and pectin from apple. The sequence is that of Extracellular endo-alpha-(1-&gt;5)-L-arabinanase 2 (abn2) from Bacillus subtilis (strain 168).